Reading from the N-terminus, the 388-residue chain is Probable mannan endo-1,4-beta-mannosidase A-1 (388 aa).

Positions 1–20 are cleaved as a signal peptide; sequence MKLSPLMALAGLASAQLALA. Substrate is bound by residues W93 and N206. Catalysis depends on E207, which acts as the Proton donor. N264 is a glycosylation site (N-linked (GlcNAc...) asparagine). Y282 contributes to the substrate binding site. The active-site Nucleophile is E315. The N-linked (GlcNAc...) asparagine glycan is linked to N335. W345 is a binding site for substrate.

It belongs to the glycosyl hydrolase 5 (cellulase A) family.

The protein localises to the secreted. It carries out the reaction Random hydrolysis of (1-&gt;4)-beta-D-mannosidic linkages in mannans, galactomannans and glucomannans.. In terms of biological role, endo-1,4-mannanase, a crucial enzyme for depolymerization of seed galactomannans and wood galactoglucomannans. This is Probable mannan endo-1,4-beta-mannosidase A-1 (manA-1) from Aspergillus terreus (strain NIH 2624 / FGSC A1156).